Here is a 470-residue protein sequence, read N- to C-terminus: MATFMTEDFLLKNDIARTLYHKYAAPMPIYDFHCHLSPQEIADDRRFDNLGQIWLEGDHYKWRALRSAGVDESLITGKETSDYEKYMAWANTVPKTLGNPLYHWTHLELRRPFGITGTLFGPDTAESIWTQCNEKLATPAFSARGIMQQMNVRMVGTTDDPIDSLEYHRQIAADDSIDIEVAPSWRPDKVFKIELDGFVDYLGKLEAAADVSITRFDDLRQALTRRLDHFAACGCLASDHGIETLRFAPVPDDAQLDAILGKRLAGETLSELEIAQFTTAVLVWLGRQYAARGWVMQLHIGAIRNNNTRMFRLLGPDTGFDSIGDNNISWALSRLLDSMDVTNELPKTILYCLNPRDNEVLATMIGNFQGPGIAGKVQFGSGWWFNDQKDGMLRQLEQLSQMGLLSQFVGMLTDSRSFLSYTRHEYFRRILCNLLGQWAQDGEIPDDEAMLSRMVQDICFNNAQRYFTIK.

Belongs to the metallo-dependent hydrolases superfamily. Uronate isomerase family.

The catalysed reaction is D-glucuronate = D-fructuronate. The enzyme catalyses aldehydo-D-galacturonate = keto-D-tagaturonate. The protein operates within carbohydrate metabolism; pentose and glucuronate interconversion. The chain is Uronate isomerase from Salmonella heidelberg (strain SL476).